The primary structure comprises 303 residues: uncharacterized protein (303 aa).

The HTH araC/xylS-type domain maps to 183–281 (KDILFYLNNN…GCSPSDYRRQ (99 aa)). 2 consecutive DNA-binding regions (H-T-H motif) follow at residues 200–221 (EQLS…TKEY) and 248–271 (QAEI…LRHV).

This is an uncharacterized protein from Escherichia coli (strain K12).